An 874-amino-acid polypeptide reads, in one-letter code: Alanine--tRNA ligase (874 aa).

Zn(2+)-binding residues include histidine 562, histidine 566, cysteine 664, and histidine 668.

The protein belongs to the class-II aminoacyl-tRNA synthetase family. Zn(2+) serves as cofactor.

It is found in the cytoplasm. It catalyses the reaction tRNA(Ala) + L-alanine + ATP = L-alanyl-tRNA(Ala) + AMP + diphosphate. Its function is as follows. Catalyzes the attachment of alanine to tRNA(Ala) in a two-step reaction: alanine is first activated by ATP to form Ala-AMP and then transferred to the acceptor end of tRNA(Ala). Also edits incorrectly charged Ser-tRNA(Ala) and Gly-tRNA(Ala) via its editing domain. The protein is Alanine--tRNA ligase of Shewanella sp. (strain ANA-3).